Here is a 196-residue protein sequence, read N- to C-terminus: Interferon lambda-3 (196 aa).

A signal peptide spans 1–21 (MTGDCMPVLVLMAAVLTVTGA). 3 disulfide bridges follow: Cys37-Cys136, Cys71-Cys169, and Cys188-Cys195.

It belongs to the lambda interferon family.

The protein resides in the secreted. In terms of biological role, cytokine with antiviral, antitumour and immunomodulatory activities. Plays a critical role in the antiviral host defense, predominantly in the epithelial tissues. Acts as a ligand for the heterodimeric class II cytokine receptor composed of IL10RB and IFNLR1, and receptor engagement leads to the activation of the JAK/STAT signaling pathway resulting in the expression of IFN-stimulated genes (ISG), which mediate the antiviral state. Has a restricted receptor distribution and therefore restricted targets: is primarily active in epithelial cells and this cell type-selective action is because of the epithelial cell-specific expression of its receptor IFNLR1. Seems not to be essential for early virus-activated host defense in vaginal infection, but plays an important role in Toll-like receptor (TLR)-induced antiviral defense. Plays a significant role in the antiviral immune defense in the intestinal epithelium. Exerts an immunomodulatory effect by up-regulating MHC class I antigen expression. The polypeptide is Interferon lambda-3 (IFNL3) (Homo sapiens (Human)).